Here is a 392-residue protein sequence, read N- to C-terminus: Adenine nucleotide transporter BT1, chloroplastic/mitochondrial (392 aa).

Solcar repeat units follow at residues 108–191 (NPSL…VNKK), 202–286 (IPIP…LRKA), and 296–384 (IGNI…CKKI). 6 helical membrane passes run 113 to 133 (RLLSGAVAGAVSRTVVAPLET), 168 to 188 (LVNVIRVAPARAVELFVFETV), 204 to 224 (IPASLLAGACAGVSQTLLTYP), 263 to 283 (APSLIGVVPYAATNYFAYDSL), 302 to 322 (LLIGSLAGALSSTATFPLEVA), and 359 to 379 (GLGPSCLKLVPAAGISFMCYE).

This sequence belongs to the mitochondrial carrier (TC 2.A.29) family. Expressed in root tips, the central cylinder of young roots, and maturating and germinating pollen.

The protein resides in the plastid. Its subcellular location is the chloroplast inner membrane. The protein localises to the mitochondrion inner membrane. With respect to regulation, inhibited by pyridoxal 5-phosphate but not mersalyl. Its function is as follows. Probable mitochondrial adenylate carrier that catalyzes the transport of ATP, ADP and AMP, but not ADP-glucose. Recombinant BT1 shows a unidirectional mode of transport in intact E.coli cells. May function as a plastidial nucleotide uniport carrier required to export newly synthesized adenylates into the cytosol. May be involved in abiotic stress response. This chain is Adenine nucleotide transporter BT1, chloroplastic/mitochondrial (BT1), found in Arabidopsis thaliana (Mouse-ear cress).